Reading from the N-terminus, the 79-residue chain is Delta-hormotoxin-Cpt1b (79 aa).

The N-terminal stretch at M1–S20 is a signal peptide. Residues R21–E31 constitute a propeptide that is removed on maturation. Disulfide bonds link C36–C75, C38–C66, and C56–C76.

It belongs to the sea anemone sodium channel inhibitory toxin family.

The protein resides in the secreted. Its subcellular location is the nematocyst. In terms of biological role, in neuromuscular preparation of crustaceans, the toxin increased neurotransmitter release, causing repetitive firing of the axons. May affect sodium channels (Nav). The protein is Delta-hormotoxin-Cpt1b of Calliactis parasitica (Sea anemone).